A 140-amino-acid polypeptide reads, in one-letter code: Putative 6-pyruvoyl tetrahydrobiopterin synthase (140 aa).

Zn(2+) is bound at residue His-19. Cys-38 acts as the Proton acceptor in catalysis. Zn(2+)-binding residues include His-44 and His-46. Active-site charge relay system residues include His-84 and Glu-129.

The protein belongs to the PTPS family. Homohexamer formed of two homotrimers in a head to head fashion. Requires Zn(2+) as cofactor.

The catalysed reaction is 7,8-dihydroneopterin 3'-triphosphate = 6-pyruvoyl-5,6,7,8-tetrahydropterin + triphosphate + H(+). It functions in the pathway cofactor biosynthesis; tetrahydrobiopterin biosynthesis; tetrahydrobiopterin from 7,8-dihydroneopterin triphosphate: step 1/3. Its function is as follows. Involved in the biosynthesis of tetrahydrobiopterin, an essential cofactor of aromatic amino acid hydroxylases. Catalyzes the transformation of 7,8-dihydroneopterin triphosphate into 6-pyruvoyl tetrahydropterin. The chain is Putative 6-pyruvoyl tetrahydrobiopterin synthase (ptps-1) from Caenorhabditis elegans.